A 211-amino-acid chain; its full sequence is Thiamine-phosphate synthase (211 aa).

Residues 37–41 (QLRIK) and Asn-69 contribute to the 4-amino-2-methyl-5-(diphosphooxymethyl)pyrimidine site. 2 residues coordinate Mg(2+): Asp-70 and Asp-89. A 4-amino-2-methyl-5-(diphosphooxymethyl)pyrimidine-binding site is contributed by Ser-108. 2-[(2R,5Z)-2-carboxy-4-methylthiazol-5(2H)-ylidene]ethyl phosphate is bound at residue 134-136 (TQT). Residue Lys-137 participates in 4-amino-2-methyl-5-(diphosphooxymethyl)pyrimidine binding. 2-[(2R,5Z)-2-carboxy-4-methylthiazol-5(2H)-ylidene]ethyl phosphate is bound by residues Gly-166 and 186–187 (VS).

The protein belongs to the thiamine-phosphate synthase family. Mg(2+) is required as a cofactor.

The catalysed reaction is 2-[(2R,5Z)-2-carboxy-4-methylthiazol-5(2H)-ylidene]ethyl phosphate + 4-amino-2-methyl-5-(diphosphooxymethyl)pyrimidine + 2 H(+) = thiamine phosphate + CO2 + diphosphate. The enzyme catalyses 2-(2-carboxy-4-methylthiazol-5-yl)ethyl phosphate + 4-amino-2-methyl-5-(diphosphooxymethyl)pyrimidine + 2 H(+) = thiamine phosphate + CO2 + diphosphate. It carries out the reaction 4-methyl-5-(2-phosphooxyethyl)-thiazole + 4-amino-2-methyl-5-(diphosphooxymethyl)pyrimidine + H(+) = thiamine phosphate + diphosphate. Its pathway is cofactor biosynthesis; thiamine diphosphate biosynthesis; thiamine phosphate from 4-amino-2-methyl-5-diphosphomethylpyrimidine and 4-methyl-5-(2-phosphoethyl)-thiazole: step 1/1. In terms of biological role, condenses 4-methyl-5-(beta-hydroxyethyl)thiazole monophosphate (THZ-P) and 2-methyl-4-amino-5-hydroxymethyl pyrimidine pyrophosphate (HMP-PP) to form thiamine monophosphate (TMP). This Escherichia coli O139:H28 (strain E24377A / ETEC) protein is Thiamine-phosphate synthase.